The following is an 89-amino-acid chain: Small ribosomal subunit protein uS15 (89 aa).

Belongs to the universal ribosomal protein uS15 family. As to quaternary structure, part of the 30S ribosomal subunit. Forms a bridge to the 50S subunit in the 70S ribosome, contacting the 23S rRNA.

One of the primary rRNA binding proteins, it binds directly to 16S rRNA where it helps nucleate assembly of the platform of the 30S subunit by binding and bridging several RNA helices of the 16S rRNA. Functionally, forms an intersubunit bridge (bridge B4) with the 23S rRNA of the 50S subunit in the ribosome. This is Small ribosomal subunit protein uS15 from Coxiella burnetii (strain CbuK_Q154) (Coxiella burnetii (strain Q154)).